The chain runs to 218 residues: MSDNDELQQIAHLRREYTRGGLRRHDLPAEPLPLFERWLRQACDAKLADPTAMVVATVDERGQPYQRIVLLKHYDEKGLVFYTNLGSRKAHQIENNPQVSLLFPWHMLERQVMVIGKAERLSTLEVVKYFHSRPRDSQIGAWVSKQSSRISARGILESKFLELKQKFQQGEVPLPSFWGGFRVSIEQMEFWQGGEHRLHDRFLYQRDSGAWKIDRLAP.

Substrate is bound by residues 14–17 and Lys-72; that span reads RREY. FMN contacts are provided by residues 67 to 72, 82 to 83, Arg-88, Lys-89, and Gln-111; these read RIVLLK and YT. Substrate-binding residues include Tyr-129, Arg-133, and Ser-137. Residues 146 to 147 and Trp-191 contribute to the FMN site; that span reads QS. Residue 197-199 participates in substrate binding; that stretch reads RLH. An FMN-binding site is contributed by Arg-201.

The protein belongs to the pyridoxamine 5'-phosphate oxidase family. As to quaternary structure, homodimer. FMN is required as a cofactor.

The enzyme catalyses pyridoxamine 5'-phosphate + O2 + H2O = pyridoxal 5'-phosphate + H2O2 + NH4(+). The catalysed reaction is pyridoxine 5'-phosphate + O2 = pyridoxal 5'-phosphate + H2O2. It functions in the pathway cofactor metabolism; pyridoxal 5'-phosphate salvage; pyridoxal 5'-phosphate from pyridoxamine 5'-phosphate: step 1/1. It participates in cofactor metabolism; pyridoxal 5'-phosphate salvage; pyridoxal 5'-phosphate from pyridoxine 5'-phosphate: step 1/1. In terms of biological role, catalyzes the oxidation of either pyridoxine 5'-phosphate (PNP) or pyridoxamine 5'-phosphate (PMP) into pyridoxal 5'-phosphate (PLP). This chain is Pyridoxine/pyridoxamine 5'-phosphate oxidase, found in Klebsiella pneumoniae subsp. pneumoniae (strain ATCC 700721 / MGH 78578).